Reading from the N-terminus, the 623-residue chain is Glutathione import ATP-binding protein GsiA (623 aa).

ABC transporter domains follow at residues valine 15–leucine 269 and leucine 325–methionine 564. ATP-binding positions include glycine 49–serine 56 and glycine 357–serine 364.

The protein belongs to the ABC transporter superfamily. Glutathione importer (TC 3.A.1.5.11) family. As to quaternary structure, the complex is composed of two ATP-binding proteins (GsiA), two transmembrane proteins (GsiC and GsiD) and a solute-binding protein (GsiB).

Its subcellular location is the cell inner membrane. It catalyses the reaction glutathione(out) + ATP + H2O = glutathione(in) + ADP + phosphate + H(+). Part of the ABC transporter complex GsiABCD involved in glutathione import. Responsible for energy coupling to the transport system. The protein is Glutathione import ATP-binding protein GsiA of Salmonella choleraesuis (strain SC-B67).